The chain runs to 1150 residues: BAI1-associated protein 3 (1150 aa).

Residues 22-44 are disordered; it reads RRKTEQEPEVTNSQEPPTGAWKP. Positions 139 to 298 constitute a C2 1 domain; sequence SSEEHMEAIM…VKSARANGTA (160 aa). 2 residues coordinate Ca(2+): aspartate 174 and aspartate 180. Residues 193–214 form a disordered region; that stretch reads APQEPSGQKEQRFGFRKGSKRS. Aspartate 258 and aspartate 260 together coordinate Ca(2+). The MHD1 domain occupies 626 to 747; that stretch reads FELYLTLADT…EASLFYTELL (122 aa). Residues 851-959 form the MHD2 domain; the sequence is DEAVAPLLKY…CSTRECIEQF (109 aa). Residues 973–1099 enclose the C2 2 domain; that stretch reads RFGRLTVRCH…GIARPHVGGG (127 aa). Residues leucine 1003, aspartate 1004, aspartate 1010, aspartate 1068, aspartate 1070, serine 1073, and aspartate 1076 each coordinate Ca(2+).

This sequence belongs to the unc-13 family. In terms of assembly, interacts with ADGRB1, this interaction is direct. Interacts with endosomal SNARE proteins VAMP3, VAMP4, STX6 and STX16; this interaction is increased in the presence of calcium. Ca(2+) serves as cofactor. In terms of tissue distribution, prominently expressed in brain structures including hypothalamus, amygdala, stria terminalis and periaqueductal gray (at protein level). Expressed in nonneuronal tissues, including placenta, lung, pancreas, spleen, and testes. Within placenta, expression is restricted to the syncytiotrophoblasts.

Its subcellular location is the cytoplasm. It localises to the cytosol. It is found in the recycling endosome membrane. The protein resides in the late endosome membrane. The protein localises to the golgi apparatus. Its subcellular location is the trans-Golgi network membrane. It localises to the cell membrane. Its function is as follows. Functions in endosome to Golgi retrograde transport. In response to calcium influx, may interact with SNARE fusion receptors and membrane phospholipids to mediate endosome fusion with the trans-Golgi network. By promoting the recycling of secretory vesicle transmembrane proteins, it indirectly controls dense-core secretory vesicle biogenesis, maturation and their ability to mediate the constitutive and regulated secretion of neurotransmitters and hormones. May regulate behavior and food intake by controlling calcium-stimulated exocytosis of neurotransmitters including NPY and serotonin and hormones like insulin. Proposed to play a role in hypothalamic neuronal firing by modulating gamma-aminobutyric acid (GABA)ergic inhibitory neurotransmission. The protein is BAI1-associated protein 3 of Mus musculus (Mouse).